Consider the following 622-residue polypeptide: 1-deoxy-D-xylulose-5-phosphate synthase (622 aa).

Thiamine diphosphate contacts are provided by residues His-80 and 121 to 123; that span reads GHS. Residue Asp-152 participates in Mg(2+) binding. Thiamine diphosphate is bound by residues 153–154, Asn-181, Tyr-288, and Glu-370; that span reads GA. Residue Asn-181 participates in Mg(2+) binding.

It belongs to the transketolase family. DXPS subfamily. Homodimer. Mg(2+) serves as cofactor. The cofactor is thiamine diphosphate.

It catalyses the reaction D-glyceraldehyde 3-phosphate + pyruvate + H(+) = 1-deoxy-D-xylulose 5-phosphate + CO2. Its pathway is metabolic intermediate biosynthesis; 1-deoxy-D-xylulose 5-phosphate biosynthesis; 1-deoxy-D-xylulose 5-phosphate from D-glyceraldehyde 3-phosphate and pyruvate: step 1/1. Its function is as follows. Catalyzes the acyloin condensation reaction between C atoms 2 and 3 of pyruvate and glyceraldehyde 3-phosphate to yield 1-deoxy-D-xylulose-5-phosphate (DXP). This chain is 1-deoxy-D-xylulose-5-phosphate synthase, found in Shewanella baltica (strain OS185).